The sequence spans 468 residues: Proline--tRNA ligase (468 aa).

Belongs to the class-II aminoacyl-tRNA synthetase family. ProS type 3 subfamily. In terms of assembly, homodimer.

Its subcellular location is the cytoplasm. The enzyme catalyses tRNA(Pro) + L-proline + ATP = L-prolyl-tRNA(Pro) + AMP + diphosphate. Its function is as follows. Catalyzes the attachment of proline to tRNA(Pro) in a two-step reaction: proline is first activated by ATP to form Pro-AMP and then transferred to the acceptor end of tRNA(Pro). The polypeptide is Proline--tRNA ligase (Frankia casuarinae (strain DSM 45818 / CECT 9043 / HFP020203 / CcI3)).